The sequence spans 101 residues: NAD(P)H-quinone oxidoreductase subunit 4L, chloroplastic (101 aa).

Transmembrane regions (helical) follow at residues 2–22 (ILEH…YGLI), 32–52 (MCLE…SDFF), and 61–81 (IFSI…LAIV).

The protein belongs to the complex I subunit 4L family. As to quaternary structure, NDH is composed of at least 16 different subunits, 5 of which are encoded in the nucleus.

It localises to the plastid. The protein localises to the chloroplast thylakoid membrane. It carries out the reaction a plastoquinone + NADH + (n+1) H(+)(in) = a plastoquinol + NAD(+) + n H(+)(out). It catalyses the reaction a plastoquinone + NADPH + (n+1) H(+)(in) = a plastoquinol + NADP(+) + n H(+)(out). NDH shuttles electrons from NAD(P)H:plastoquinone, via FMN and iron-sulfur (Fe-S) centers, to quinones in the photosynthetic chain and possibly in a chloroplast respiratory chain. The immediate electron acceptor for the enzyme in this species is believed to be plastoquinone. Couples the redox reaction to proton translocation, and thus conserves the redox energy in a proton gradient. The protein is NAD(P)H-quinone oxidoreductase subunit 4L, chloroplastic of Nicotiana sylvestris (Wood tobacco).